The primary structure comprises 384 residues: Guanine nucleotide-binding protein alpha-1 subunit (384 aa).

A disordered region spans residues 1 to 22; the sequence is MGSLCSRNKHYSQADDEENTQT. A lipid anchor (N-myristoyl glycine) is attached at G2. A lipid anchor (S-palmitoyl cysteine) is attached at C5. Residues 38–384 form the G-alpha domain; it reads HIQKLLLLGA…RRNLFEAGLL (347 aa). A G1 motif region spans residues 41 to 54; it reads KLLLLGAGDSGKST. D49, S50, G51, K52, S53, T54, D163, L188, T194, G222, N288, K289, D291, and A356 together coordinate GTP. Residue S53 coordinates Mg(2+). The interval 186-194 is G2 motif; sequence DVLFARIRT. T194 contacts Mg(2+). Residues 215-224 are G3 motif; it reads YRLFDVGGQR. Residues 284-291 are G4 motif; it reads MLFLNKFD. The tract at residues 354 to 359 is G5 motif; sequence TTALDQ.

It belongs to the G-alpha family. As to quaternary structure, g proteins are composed of 3 units; alpha, beta and gamma. The alpha chain contains the guanine nucleotide binding site. Mg(2+) serves as cofactor.

In terms of biological role, guanine nucleotide-binding proteins (G proteins) are involved as modulators or transducers in various transmembrane signaling systems. The chain is Guanine nucleotide-binding protein alpha-1 subunit (GPA1) from Solanum lycopersicum (Tomato).